A 105-amino-acid chain; its full sequence is Cell division protein FtsB (105 aa).

Residues 1–3 (MGK) are Cytoplasmic-facing. A helical transmembrane segment spans residues 4–21 (LTLLLLALLVWLQYSLWF). The Periplasmic portion of the chain corresponds to 22 to 105 (GKNGLHDYTR…QASGQQQNNR (84 aa)). Positions 33 to 62 (NDDVTAQQATNAKLKARNDQLFAEIDDLNG) form a coiled coil.

It belongs to the FtsB family. Part of a complex composed of FtsB, FtsL and FtsQ.

The protein resides in the cell inner membrane. Its function is as follows. Essential cell division protein. May link together the upstream cell division proteins, which are predominantly cytoplasmic, with the downstream cell division proteins, which are predominantly periplasmic. In Klebsiella aerogenes (Enterobacter aerogenes), this protein is Cell division protein FtsB.